The following is a 135-amino-acid chain: Cilia- and flagella-associated protein 144 (135 aa).

A disordered region spans residues 76 to 100 (QGPKKKYSETQTEAQEIGWDPNPLI).

The protein belongs to the CFAP144 family. Microtubule inner protein component of sperm flagellar doublet microtubules. In terms of tissue distribution, predominantly expressed in tissues containing motile cilia.

It is found in the cytoplasm. Its subcellular location is the cytoskeleton. The protein localises to the cilium axoneme. It localises to the flagellum axoneme. The chain is Cilia- and flagella-associated protein 144 from Mus musculus (Mouse).